The following is a 453-amino-acid chain: Chromosomal replication initiator protein DnaA (453 aa).

Residues 1–71 (MSEKEIWEKV…QAILFDVVGY (71 aa)) are domain I, interacts with DnaA modulators. The segment at 71 to 114 (YEVKPHFITTEELANYSNNETATPKETTKPSTETTEDNHVLGRE) is domain II. The domain III, AAA+ region stretch occupies residues 115–331 (QFNAHNTFDT…GALTRLLAYS (217 aa)). ATP contacts are provided by Gly-159, Gly-161, Lys-162, and Thr-163. The segment at 332–453 (QLLGKPITTE…ENLEKEIRNV (122 aa)) is domain IV, binds dsDNA.

The protein belongs to the DnaA family. As to quaternary structure, oligomerizes as a right-handed, spiral filament on DNA at oriC.

The protein localises to the cytoplasm. Functionally, plays an essential role in the initiation and regulation of chromosomal replication. ATP-DnaA binds to the origin of replication (oriC) to initiate formation of the DNA replication initiation complex once per cell cycle. Binds the DnaA box (a 9 base pair repeat at the origin) and separates the double-stranded (ds)DNA. Forms a right-handed helical filament on oriC DNA; dsDNA binds to the exterior of the filament while single-stranded (ss)DNA is stabiized in the filament's interior. The ATP-DnaA-oriC complex binds and stabilizes one strand of the AT-rich DNA unwinding element (DUE), permitting loading of DNA polymerase. After initiation quickly degrades to an ADP-DnaA complex that is not apt for DNA replication. Binds acidic phospholipids. The polypeptide is Chromosomal replication initiator protein DnaA (Staphylococcus aureus (strain Mu3 / ATCC 700698)).